Here is a 159-residue protein sequence, read N- to C-terminus: 2-C-methyl-D-erythritol 2,4-cyclodiphosphate synthase (159 aa).

Positions 10 and 12 each coordinate a divalent metal cation. 4-CDP-2-C-methyl-D-erythritol 2-phosphate-binding positions include Asp-10–His-12 and His-36–Ser-37. Residue His-44 participates in a divalent metal cation binding. Residues Asp-58–Gly-60, Phe-63–Asp-67, Ala-102–Ala-108, Thr-134–Glu-137, Phe-141, and Arg-144 each bind 4-CDP-2-C-methyl-D-erythritol 2-phosphate.

It belongs to the IspF family. As to quaternary structure, homotrimer. A divalent metal cation serves as cofactor.

It carries out the reaction 4-CDP-2-C-methyl-D-erythritol 2-phosphate = 2-C-methyl-D-erythritol 2,4-cyclic diphosphate + CMP. It functions in the pathway isoprenoid biosynthesis; isopentenyl diphosphate biosynthesis via DXP pathway; isopentenyl diphosphate from 1-deoxy-D-xylulose 5-phosphate: step 4/6. In terms of biological role, involved in the biosynthesis of isopentenyl diphosphate (IPP) and dimethylallyl diphosphate (DMAPP), two major building blocks of isoprenoid compounds. Catalyzes the conversion of 4-diphosphocytidyl-2-C-methyl-D-erythritol 2-phosphate (CDP-ME2P) to 2-C-methyl-D-erythritol 2,4-cyclodiphosphate (ME-CPP) with a corresponding release of cytidine 5-monophosphate (CMP). This chain is 2-C-methyl-D-erythritol 2,4-cyclodiphosphate synthase, found in Cellvibrio japonicus (strain Ueda107) (Pseudomonas fluorescens subsp. cellulosa).